The chain runs to 279 residues: Probable phosphatase phospho1 (279 aa).

The active-site Nucleophile is Asp41. Mg(2+) contacts are provided by Asp41 and Asp43. Residue Asp43 is the Proton donor of the active site. Substrate-binding residues include Asp52 and Asp133. Asp215 contacts Mg(2+).

The protein belongs to the HAD-like hydrolase superfamily. PHOSPHO family. The cofactor is Mg(2+).

It localises to the extracellular vesicle. It catalyses the reaction phosphoethanolamine + H2O = ethanolamine + phosphate. It carries out the reaction phosphocholine + H2O = choline + phosphate. Phosphatase that has a high activity toward phosphoethanolamine (PEA) and phosphocholine (PCho). Involved in the generation of inorganic phosphate for bone mineralization. This Danio rerio (Zebrafish) protein is Probable phosphatase phospho1 (phospho1).